The following is a 628-amino-acid chain: Probable potassium transport system protein Kup (628 aa).

A run of 12 helical transmembrane segments spans residues 15–35 (LAIA…LYSL), 55–75 (VISL…VLFV), 104–124 (AGLL…DAVI), 142–162 (PHLS…LFWI), 173–193 (LFGP…LWHI), 210–230 (TFMA…VLVL), 252–272 (WYVL…ALLM), 281–301 (PFFL…STIA), 342–362 (IYVP…VIAF), 372–392 (YGIA…VVMV), 400–420 (LLVA…FGAN), and 426–446 (EGGW…MTWY).

Belongs to the HAK/KUP transporter (TC 2.A.72) family.

Its subcellular location is the cell inner membrane. It carries out the reaction K(+)(in) + H(+)(in) = K(+)(out) + H(+)(out). In terms of biological role, transport of potassium into the cell. Likely operates as a K(+):H(+) symporter. The polypeptide is Probable potassium transport system protein Kup (Paraburkholderia xenovorans (strain LB400)).